A 339-amino-acid chain; its full sequence is D-alanine--D-alanine ligase (339 aa).

Positions 115–327 (KHIFRSLGID…FNELVKIIIE (213 aa)) constitute an ATP-grasp domain. 142-211 (KIDYPYVLKP…EEYIPGIELH (70 aa)) contributes to the ATP binding site. Positions 279, 293, and 295 each coordinate Mg(2+).

It belongs to the D-alanine--D-alanine ligase family. The cofactor is Mg(2+). It depends on Mn(2+) as a cofactor.

It localises to the cytoplasm. It catalyses the reaction 2 D-alanine + ATP = D-alanyl-D-alanine + ADP + phosphate + H(+). It participates in cell wall biogenesis; peptidoglycan biosynthesis. Functionally, cell wall formation. The chain is D-alanine--D-alanine ligase from Wolbachia sp. subsp. Brugia malayi (strain TRS).